Here is a 398-residue protein sequence, read N- to C-terminus: Histidinol-phosphate aminotransferase (398 aa).

Over residues 1–10 the composition is skewed to polar residues; that stretch reads MTGQRATPQP. The disordered stretch occupies residues 1–30; sequence MTGQRATPQPTLDDLPLRDDLRGKSPYGAP. Lysine 234 carries the N6-(pyridoxal phosphate)lysine modification.

The protein belongs to the class-II pyridoxal-phosphate-dependent aminotransferase family. Histidinol-phosphate aminotransferase subfamily. In terms of assembly, homodimer. Pyridoxal 5'-phosphate serves as cofactor.

It catalyses the reaction L-histidinol phosphate + 2-oxoglutarate = 3-(imidazol-4-yl)-2-oxopropyl phosphate + L-glutamate. It participates in amino-acid biosynthesis; L-histidine biosynthesis; L-histidine from 5-phospho-alpha-D-ribose 1-diphosphate: step 7/9. In Mycolicibacterium paratuberculosis (strain ATCC BAA-968 / K-10) (Mycobacterium paratuberculosis), this protein is Histidinol-phosphate aminotransferase.